The sequence spans 600 residues: Adenine deaminase (600 aa).

The protein belongs to the metallo-dependent hydrolases superfamily. Adenine deaminase family. The cofactor is Mn(2+).

The catalysed reaction is adenine + H2O + H(+) = hypoxanthine + NH4(+). This chain is Adenine deaminase, found in Chelativorans sp. (strain BNC1).